We begin with the raw amino-acid sequence, 435 residues long: Methylenetetrahydrofolate--tRNA-(uracil-5-)-methyltransferase TrmFO (435 aa).

An FAD-binding site is contributed by 9 to 14 (GAGLAG).

Belongs to the MnmG family. TrmFO subfamily. FAD serves as cofactor.

The protein localises to the cytoplasm. It catalyses the reaction uridine(54) in tRNA + (6R)-5,10-methylene-5,6,7,8-tetrahydrofolate + NADH + H(+) = 5-methyluridine(54) in tRNA + (6S)-5,6,7,8-tetrahydrofolate + NAD(+). The catalysed reaction is uridine(54) in tRNA + (6R)-5,10-methylene-5,6,7,8-tetrahydrofolate + NADPH + H(+) = 5-methyluridine(54) in tRNA + (6S)-5,6,7,8-tetrahydrofolate + NADP(+). Catalyzes the folate-dependent formation of 5-methyl-uridine at position 54 (M-5-U54) in all tRNAs. The polypeptide is Methylenetetrahydrofolate--tRNA-(uracil-5-)-methyltransferase TrmFO (Staphylococcus saprophyticus subsp. saprophyticus (strain ATCC 15305 / DSM 20229 / NCIMB 8711 / NCTC 7292 / S-41)).